The sequence spans 415 residues: Branched-chain-amino-acid aminotransferase, cytosolic (415 aa).

Lys244 carries the post-translational modification N6-(pyridoxal phosphate)lysine.

The protein belongs to the class-IV pyridoxal-phosphate-dependent aminotransferase family. It depends on pyridoxal 5'-phosphate as a cofactor.

The protein resides in the cytoplasm. The enzyme catalyses L-leucine + 2-oxoglutarate = 4-methyl-2-oxopentanoate + L-glutamate. The catalysed reaction is L-isoleucine + 2-oxoglutarate = (S)-3-methyl-2-oxopentanoate + L-glutamate. It catalyses the reaction L-valine + 2-oxoglutarate = 3-methyl-2-oxobutanoate + L-glutamate. Its function is as follows. Catalyzes the first reaction in the catabolism of the essential branched chain amino acids leucine, isoleucine, and valine. This chain is Branched-chain-amino-acid aminotransferase, cytosolic (bcat-1), found in Caenorhabditis elegans.